The primary structure comprises 376 residues: Formate dehydrogenase 2 (376 aa).

Residues valine 97 and asparagine 121 each coordinate substrate. Residues 176–177, aspartate 197, 244–248, threonine 270, aspartate 296, and 325–328 each bind NAD(+); these read RI, PLHKD, and HISG.

This sequence belongs to the D-isomer specific 2-hydroxyacid dehydrogenase family. FDH subfamily. As to quaternary structure, homodimer.

It is found in the cytoplasm. The enzyme catalyses formate + NAD(+) = CO2 + NADH. Its function is as follows. Catalyzes the NAD(+)-dependent oxidation of formate to carbon dioxide. Formate oxidation is the final step in the methanol oxidation pathway in methylotrophic microorganisms. Has a role in the detoxification of exogenous formate in non-methylotrophic organisms. The sequence is that of Formate dehydrogenase 2 (FDH2) from Saccharomyces cerevisiae (strain CEN.PK113-7D) (Baker's yeast).